We begin with the raw amino-acid sequence, 573 residues long: 2-succinyl-5-enolpyruvyl-6-hydroxy-3-cyclohexene-1-carboxylate synthase (573 aa).

It belongs to the TPP enzyme family. MenD subfamily. As to quaternary structure, homodimer. The cofactor is Mg(2+). Requires Mn(2+) as cofactor. It depends on thiamine diphosphate as a cofactor.

It catalyses the reaction isochorismate + 2-oxoglutarate + H(+) = 5-enolpyruvoyl-6-hydroxy-2-succinyl-cyclohex-3-ene-1-carboxylate + CO2. The protein operates within quinol/quinone metabolism; 1,4-dihydroxy-2-naphthoate biosynthesis; 1,4-dihydroxy-2-naphthoate from chorismate: step 2/7. It functions in the pathway quinol/quinone metabolism; menaquinone biosynthesis. Its function is as follows. Catalyzes the thiamine diphosphate-dependent decarboxylation of 2-oxoglutarate and the subsequent addition of the resulting succinic semialdehyde-thiamine pyrophosphate anion to isochorismate to yield 2-succinyl-5-enolpyruvyl-6-hydroxy-3-cyclohexene-1-carboxylate (SEPHCHC). The polypeptide is 2-succinyl-5-enolpyruvyl-6-hydroxy-3-cyclohexene-1-carboxylate synthase (Shewanella baltica (strain OS155 / ATCC BAA-1091)).